The following is a 471-amino-acid chain: Adenosylhomocysteinase (471 aa).

T60, D135, and E196 together coordinate substrate. 197–199 (TTT) serves as a coordination point for NAD(+). Residues K226 and D230 each contribute to the substrate site. Residues N231, 260–265 (GYGDVG), E283, N318, 339–341 (IGH), and N387 each bind NAD(+).

This sequence belongs to the adenosylhomocysteinase family. The cofactor is NAD(+).

It localises to the cytoplasm. The enzyme catalyses S-adenosyl-L-homocysteine + H2O = L-homocysteine + adenosine. It participates in amino-acid biosynthesis; L-homocysteine biosynthesis; L-homocysteine from S-adenosyl-L-homocysteine: step 1/1. Functionally, may play a key role in the regulation of the intracellular concentration of adenosylhomocysteine. The chain is Adenosylhomocysteinase from Chlorobium limicola (strain DSM 245 / NBRC 103803 / 6330).